We begin with the raw amino-acid sequence, 132 residues long: Small ribosomal subunit protein uS11 (132 aa).

Belongs to the universal ribosomal protein uS11 family. As to quaternary structure, part of the 30S ribosomal subunit. Interacts with proteins S7 and S18. Binds to IF-3.

Its function is as follows. Located on the platform of the 30S subunit, it bridges several disparate RNA helices of the 16S rRNA. Forms part of the Shine-Dalgarno cleft in the 70S ribosome. The polypeptide is Small ribosomal subunit protein uS11 (Cupriavidus pinatubonensis (strain JMP 134 / LMG 1197) (Cupriavidus necator (strain JMP 134))).